We begin with the raw amino-acid sequence, 327 residues long: GTPase Obg (327 aa).

In terms of domain architecture, Obg spans 2 to 160; sequence HTFKDSLNIT…LDLRLELVLI (159 aa). The region spanning 161-326 is the OBG-type G domain; sequence ADIGLVGLPN…LVNELFALSR (166 aa). GTP contacts are provided by residues 167-174, 192-196, 213-216, 280-283, and 307-309; these read GLPNAGKS, FTTKV, DVPG, NKLD, and SIY. The Mg(2+) site is built by Ser174 and Thr194.

Belongs to the TRAFAC class OBG-HflX-like GTPase superfamily. OBG GTPase family. As to quaternary structure, monomer. Mg(2+) serves as cofactor.

It is found in the cytoplasm. Functionally, an essential GTPase which binds GTP, GDP and possibly (p)ppGpp with moderate affinity, with high nucleotide exchange rates and a fairly low GTP hydrolysis rate. Plays a role in control of the cell cycle, stress response, ribosome biogenesis and in those bacteria that undergo differentiation, in morphogenesis control. This is GTPase Obg from Borrelia turicatae (strain 91E135).